The sequence spans 512 residues: Ammonium transporter 2 (512 aa).

At 1-47 (MSSVNSIPTATSTVYISVLPATATPSGGSGGNVLHEDLNKFYDYGNT) the chain is on the extracellular side. A helical transmembrane segment spans residues 48–68 (SWILACTPLCLIMVPGVAFFY). At 69–77 (SGLARRKNT) the chain is on the cytoplasmic side. The chain crosses the membrane as a helical span at residues 78–98 (LALIMLSMLGLCVSFFQWYFW). Residues 99 to 137 (GYSLAFSQTGTSGYIGNLRHFAFIRTLADYSPGSNNIPE) lie on the Extracellular side of the membrane. A helical membrane pass occupies residues 138-158 (LVFANFQGMFAAITVALFTGA). The Cytoplasmic portion of the chain corresponds to 159–167 (AAERGRIGP). Residues 168–188 (MLIITFVWLTVVYCPIACWIW) form a helical membrane-spanning segment. The Extracellular segment spans residues 189–201 (NPNGWAFKFGVYD). A helical membrane pass occupies residues 202–222 (FAGGGPVEVGSGFAALAYTVC). The Cytoplasmic portion of the chain corresponds to 223–238 (LGRRSKFVEEQFRPHS). The helical transmembrane segment at 239–259 (VLNVVLGTSLLWFGWLGFNGG) threads the bilayer. The Extracellular portion of the chain corresponds to 260–267 (SAYGSNLR). Residues 268-288 (AAMAITNTNLAGAVAGLVWVI) form a helical membrane-spanning segment. At 289–300 (YDYIFRTRKWST) the chain is on the cytoplasmic side. The helical transmembrane segment at 301–321 (IGFCSGVVAGLVAATPCAGFV) threads the bilayer. A topological domain (extracellular) is located at residue Ser-322. A helical transmembrane segment spans residues 323 to 343 (PHASLAIGAITGLCCNWAIKL). Topologically, residues 344-354 (KSHMRIDDAMD) are cytoplasmic. The helical transmembrane segment at 355–375 (IFAIHGVAGFVGTFLNGLFAV) threads the bilayer. Over 376–406 (DYIAAMDGIYVGENKIRGGWFDHHWRQLGLQ) the chain is Extracellular. Residues 407–427 (MAYICAVGAYDFVVTFIILFI) form a helical membrane-spanning segment. The Cytoplasmic segment spans residues 428-512 (TDKIPYLQLR…TNPLELGLTI (85 aa)).

This sequence belongs to the ammonia transporter channel (TC 1.A.11.2) family.

It localises to the membrane. Functionally, transporter for ammonium to use as a nitrogen source. This is Ammonium transporter 2 (amt2) from Schizosaccharomyces pombe (strain 972 / ATCC 24843) (Fission yeast).